The chain runs to 644 residues: Probable potassium transport system protein Kup (644 aa).

Helical transmembrane passes span 10-30, 56-76, 106-126, 143-163, 175-195, 212-232, 252-272, 282-302, 343-363, 371-391, 403-423, and 425-445; these read GGAT…GDIG, ILSL…AWVI, WWIL…GVIT, PAWK…LFMV, FGPS…TWIV, FFGI…LAVT, AWYF…GALL, PFFM…SGIA, IYLP…ILWF, FAYG…VFFV, AGLF…ANLL, and FVEG…TMST.

It belongs to the HAK/KUP transporter (TC 2.A.72) family.

The protein resides in the cell inner membrane. It catalyses the reaction K(+)(in) + H(+)(in) = K(+)(out) + H(+)(out). Its function is as follows. Transport of potassium into the cell. Likely operates as a K(+):H(+) symporter. The polypeptide is Probable potassium transport system protein Kup (Acidithiobacillus ferrooxidans (strain ATCC 23270 / DSM 14882 / CIP 104768 / NCIMB 8455) (Ferrobacillus ferrooxidans (strain ATCC 23270))).